Here is a 446-residue protein sequence, read N- to C-terminus: Na(+)-translocating NADH-quinone reductase subunit A (446 aa).

Belongs to the NqrA family. In terms of assembly, composed of six subunits; NqrA, NqrB, NqrC, NqrD, NqrE and NqrF.

It carries out the reaction a ubiquinone + n Na(+)(in) + NADH + H(+) = a ubiquinol + n Na(+)(out) + NAD(+). NQR complex catalyzes the reduction of ubiquinone-1 to ubiquinol by two successive reactions, coupled with the transport of Na(+) ions from the cytoplasm to the periplasm. NqrA to NqrE are probably involved in the second step, the conversion of ubisemiquinone to ubiquinol. This chain is Na(+)-translocating NADH-quinone reductase subunit A, found in Pasteurella multocida (strain Pm70).